A 303-amino-acid polypeptide reads, in one-letter code: Recombination-associated protein RdgC (303 aa).

Belongs to the RdgC family.

It localises to the cytoplasm. The protein localises to the nucleoid. Functionally, may be involved in recombination. In Salmonella agona (strain SL483), this protein is Recombination-associated protein RdgC.